The primary structure comprises 861 residues: Probable linoleate 9S-lipoxygenase 7 (861 aa).

The region spanning 29 to 160 is the PLAT domain; sequence NVLDFTDLAG…NYKSDRIFFA (132 aa). A Lipoxygenase domain is found at 163–861; the sequence is PYLPSETPEL…GKGIPNSVSI (699 aa). The interval 220 to 246 is disordered; the sequence is TLGGSAEYPYPRRGRTGRPPTRTDPKS. Fe cation-binding residues include His-522, His-527, His-713, Asn-717, and Ile-861.

The protein belongs to the lipoxygenase family. In terms of assembly, monomer. Fe cation serves as cofactor. As to expression, expressed in tubers. Detected in sprouts and flowers. but not in leaves or stems.

The protein resides in the cytoplasm. It catalyses the reaction (9Z,12Z)-octadecadienoate + O2 = (9S)-hydroperoxy-(10E,12Z)-octadecadienoate. The protein operates within lipid metabolism; oxylipin biosynthesis. Plant lipoxygenases may be involved in a number of diverse aspects of plant physiology including growth and development, pest resistance, and senescence or responses to wounding. Catalyzes the hydroperoxidation of lipids containing a cis,cis-1,4-pentadiene structure. The protein is Probable linoleate 9S-lipoxygenase 7 (LOX1.7) of Solanum tuberosum (Potato).